The following is a 62-amino-acid chain: Protein UL148D (62 aa).

A helical transmembrane segment spans residues 30 to 50; sequence WWISVAIVIFIGVCLVALMYF.

It is found in the host membrane. This is Protein UL148D (UL148D) from Human cytomegalovirus (strain Merlin) (HHV-5).